We begin with the raw amino-acid sequence, 145 residues long: uncharacterized protein (145 aa).

A helical membrane pass occupies residues 46-66 (FFFLFFLFFFFFFTFQFLVAF).

The protein resides in the membrane. This is an uncharacterized protein from Saccharomyces cerevisiae (strain ATCC 204508 / S288c) (Baker's yeast).